The chain runs to 596 residues: Elongation factor 4 (596 aa).

A tr-type G domain is found at 2–183; the sequence is ENIRNFSIIA…AIIERIPAPS (182 aa). Residues 14–19 and 130–133 contribute to the GTP site; these read DHGKST and NKID.

Belongs to the TRAFAC class translation factor GTPase superfamily. Classic translation factor GTPase family. LepA subfamily.

The protein resides in the cell inner membrane. It catalyses the reaction GTP + H2O = GDP + phosphate + H(+). Functionally, required for accurate and efficient protein synthesis under certain stress conditions. May act as a fidelity factor of the translation reaction, by catalyzing a one-codon backward translocation of tRNAs on improperly translocated ribosomes. Back-translocation proceeds from a post-translocation (POST) complex to a pre-translocation (PRE) complex, thus giving elongation factor G a second chance to translocate the tRNAs correctly. Binds to ribosomes in a GTP-dependent manner. This Nitratiruptor sp. (strain SB155-2) protein is Elongation factor 4.